A 152-amino-acid chain; its full sequence is Urease accessory protein UreE (152 aa).

The protein belongs to the UreE family.

It is found in the cytoplasm. Its function is as follows. Involved in urease metallocenter assembly. Binds nickel. Probably functions as a nickel donor during metallocenter assembly. This Citrobacter koseri (strain ATCC BAA-895 / CDC 4225-83 / SGSC4696) protein is Urease accessory protein UreE.